A 698-amino-acid chain; its full sequence is uncharacterized protein (698 aa).

Residues methionine 1–alanine 17 form the signal peptide. Residue cysteine 18 is the site of N-palmitoyl cysteine attachment. Cysteine 18 carries S-diacylglycerol cysteine lipidation.

It to E.coli YmcA.

Its subcellular location is the cell membrane. This is an uncharacterized protein from Escherichia coli (strain K12).